The following is a 305-amino-acid chain: NAD-dependent protein deacylase sirtuin-5, mitochondrial (305 aa).

Residues 1-32 (MIVRQLWCSRGSTSHLCAAVRLNWRSPKMTRP) constitute a mitochondrion transit peptide. The Deacetylase sirtuin-type domain maps to 33–303 (SSDLTAFREH…PPALERHESE (271 aa)). NAD(+) is bound at residue 54 to 73 (GAGVSAESGVPTFRGPGGFW). Tyr-98 and Arg-101 together coordinate substrate. 136 to 139 (QNID) is an NAD(+) binding site. The active-site Proton acceptor is His-154. Zn(2+) contacts are provided by Cys-162, Cys-165, Cys-203, and Cys-208. NAD(+) is bound by residues 245–247 (GTS), 271–273 (NME), and Cys-289.

This sequence belongs to the sirtuin family. Class III subfamily. It depends on Zn(2+) as a cofactor.

It is found in the mitochondrion. Its subcellular location is the cytoplasm. It localises to the cytosol. The protein localises to the nucleus. It carries out the reaction N(6)-malonyl-L-lysyl-[protein] + NAD(+) + H2O = 2''-O-malonyl-ADP-D-ribose + nicotinamide + L-lysyl-[protein]. The enzyme catalyses N(6)-succinyl-L-lysyl-[protein] + NAD(+) + H2O = 2''-O-succinyl-ADP-D-ribose + nicotinamide + L-lysyl-[protein]. It catalyses the reaction N(6)-glutaryl-L-lysyl-[protein] + NAD(+) + H2O = 2''-O-glutaryl-ADP-D-ribose + nicotinamide + L-lysyl-[protein]. In terms of biological role, NAD-dependent lysine demalonylase, desuccinylase and deglutarylase that specifically removes malonyl, succinyl and glutaryl groups on target proteins. Has weak NAD-dependent protein deacetylase activity; however this activity may not be physiologically relevant in vivo. This chain is NAD-dependent protein deacylase sirtuin-5, mitochondrial (sirt5), found in Danio rerio (Zebrafish).